A 453-amino-acid chain; its full sequence is Bifunctional protein GlmU (453 aa).

The tract at residues 1–227 (MTQDIVILAA…EAEVAGVNDR (227 aa)) is pyrophosphorylase. UDP-N-acetyl-alpha-D-glucosamine-binding positions include 8-11 (LAAG), K22, Q73, 78-79 (GT), 100-102 (YGD), G137, E152, N167, and N225. D102 contacts Mg(2+). N225 contributes to the Mg(2+) binding site. The interval 228-248 (VQLAALERELQNQQAVSLMQN) is linker. Residues 249–453 (GATLLDPSRI…KDNWPRPIKK (205 aa)) form an N-acetyltransferase region. R331 and K349 together coordinate UDP-N-acetyl-alpha-D-glucosamine. The active-site Proton acceptor is H361. 2 residues coordinate UDP-N-acetyl-alpha-D-glucosamine: Y364 and N375. Acetyl-CoA-binding positions include A378, 384 to 385 (NY), S403, A421, and R438.

This sequence in the N-terminal section; belongs to the N-acetylglucosamine-1-phosphate uridyltransferase family. It in the C-terminal section; belongs to the transferase hexapeptide repeat family. As to quaternary structure, homotrimer. Requires Mg(2+) as cofactor.

It localises to the cytoplasm. It catalyses the reaction alpha-D-glucosamine 1-phosphate + acetyl-CoA = N-acetyl-alpha-D-glucosamine 1-phosphate + CoA + H(+). It carries out the reaction N-acetyl-alpha-D-glucosamine 1-phosphate + UTP + H(+) = UDP-N-acetyl-alpha-D-glucosamine + diphosphate. The protein operates within nucleotide-sugar biosynthesis; UDP-N-acetyl-alpha-D-glucosamine biosynthesis; N-acetyl-alpha-D-glucosamine 1-phosphate from alpha-D-glucosamine 6-phosphate (route II): step 2/2. Its pathway is nucleotide-sugar biosynthesis; UDP-N-acetyl-alpha-D-glucosamine biosynthesis; UDP-N-acetyl-alpha-D-glucosamine from N-acetyl-alpha-D-glucosamine 1-phosphate: step 1/1. It functions in the pathway bacterial outer membrane biogenesis; LPS lipid A biosynthesis. Its function is as follows. Catalyzes the last two sequential reactions in the de novo biosynthetic pathway for UDP-N-acetylglucosamine (UDP-GlcNAc). The C-terminal domain catalyzes the transfer of acetyl group from acetyl coenzyme A to glucosamine-1-phosphate (GlcN-1-P) to produce N-acetylglucosamine-1-phosphate (GlcNAc-1-P), which is converted into UDP-GlcNAc by the transfer of uridine 5-monophosphate (from uridine 5-triphosphate), a reaction catalyzed by the N-terminal domain. The protein is Bifunctional protein GlmU of Marinomonas sp. (strain MWYL1).